Here is a 347-residue protein sequence, read N- to C-terminus: NADH-ubiquinone oxidoreductase chain 2 (347 aa).

The next 11 helical transmembrane spans lie at 3–23 (PVVL…VMTT), 25–45 (HWLL…PILM), 59–79 (YFLT…INLI), 96–116 (IIMT…FWVP), 122–142 (IQLS…MSIL), 149–169 (INLH…GWGG), 178–198 (IMAY…IYNP), 200–220 (MALL…MTFM), 237–257 (MPLL…LPPL), 274–294 (NSII…FFYM), and 325–345 (LLSP…MLAL).

The protein belongs to the complex I subunit 2 family. In terms of assembly, core subunit of respiratory chain NADH dehydrogenase (Complex I) which is composed of 45 different subunits. Interacts with TMEM242.

The protein localises to the mitochondrion inner membrane. The catalysed reaction is a ubiquinone + NADH + 5 H(+)(in) = a ubiquinol + NAD(+) + 4 H(+)(out). Its function is as follows. Core subunit of the mitochondrial membrane respiratory chain NADH dehydrogenase (Complex I) which catalyzes electron transfer from NADH through the respiratory chain, using ubiquinone as an electron acceptor. Essential for the catalytic activity and assembly of complex I. This chain is NADH-ubiquinone oxidoreductase chain 2, found in Paranyctimene raptor (Unstriped tube-nosed fruit bat).